Here is a 360-residue protein sequence, read N- to C-terminus: 3-dehydroquinate synthase (360 aa).

NAD(+) contacts are provided by residues Asp70–Lys75, Gly104–Asp108, Thr128–Thr129, Lys141, and Lys150. Residues Glu183, His246, and His263 each contribute to the Zn(2+) site.

Belongs to the sugar phosphate cyclases superfamily. Dehydroquinate synthase family. Co(2+) is required as a cofactor. It depends on Zn(2+) as a cofactor. The cofactor is NAD(+).

It localises to the cytoplasm. The catalysed reaction is 7-phospho-2-dehydro-3-deoxy-D-arabino-heptonate = 3-dehydroquinate + phosphate. Its pathway is metabolic intermediate biosynthesis; chorismate biosynthesis; chorismate from D-erythrose 4-phosphate and phosphoenolpyruvate: step 2/7. In terms of biological role, catalyzes the conversion of 3-deoxy-D-arabino-heptulosonate 7-phosphate (DAHP) to dehydroquinate (DHQ). This is 3-dehydroquinate synthase from Acinetobacter baumannii (strain AYE).